Consider the following 362-residue polypeptide: Ferredoxin--NADP reductase, leaf isozyme 1, chloroplastic (362 aa).

Residues 1-36 (MAAVTAAAVSTSAAAAVTKASPSPAHCFLPCPPRTR) constitute a chloroplast transit peptide. The 123-residue stretch at 83–205 (KEPYVGKCLL…TGPVGKEMLM (123 aa)) folds into the FAD-binding FR-type domain. FAD-binding positions include 141–144 (RLYS), 162–164 (CVK), Tyr-168, 179–181 (VCS), and Thr-220. Ser-144 and Lys-164 together coordinate NADP(+). A disulfide bridge links Cys-180 with Cys-185. Ser-181 bears the Phosphoserine mark. NADP(+) contacts are provided by residues Thr-220, 252-253 (VP), 282-283 (SR), Lys-292, 321-322 (GL), and Glu-360.

It belongs to the ferredoxin--NADP reductase type 1 family. In terms of assembly, heterodimer with LFNR2. Component of high molecular weight thylakoid LFNRs-containing protein complexes containing LIR1, LFNR1, LFNR2, TIC62 and TROL proteins. Interacts directly with LFNR1 and LFNR2; LIR1 increases the affinity of LFNR1 and LFNR2 for TIC62 and subsequent thylakoid relocalization. Requires FAD as cofactor. May form interchain disulfide bonds with LIR1.

It is found in the plastid. Its subcellular location is the chloroplast stroma. The protein resides in the chloroplast thylakoid membrane. The catalysed reaction is 2 reduced [2Fe-2S]-[ferredoxin] + NADP(+) + H(+) = 2 oxidized [2Fe-2S]-[ferredoxin] + NADPH. It participates in energy metabolism; photosynthesis. Its function is as follows. Plays a key role in regulating the relative amounts of cyclic and non-cyclic electron flow to meet the demands of the plant for ATP and reducing power. In Oryza sativa subsp. indica (Rice), this protein is Ferredoxin--NADP reductase, leaf isozyme 1, chloroplastic.